Here is a 188-residue protein sequence, read N- to C-terminus: Elongation factor P (188 aa).

Lysine 34 is modified (N6-(3,6-diaminohexanoyl)-5-hydroxylysine).

It belongs to the elongation factor P family. In terms of processing, may be beta-lysylated on the epsilon-amino group of Lys-34 by the combined action of EpmA and EpmB, and then hydroxylated on the C5 position of the same residue by EpmC (if this protein is present). Lysylation is critical for the stimulatory effect of EF-P on peptide-bond formation. The lysylation moiety may extend toward the peptidyltransferase center and stabilize the terminal 3-CCA end of the tRNA. Hydroxylation of the C5 position on Lys-34 may allow additional potential stabilizing hydrogen-bond interactions with the P-tRNA.

It localises to the cytoplasm. Its pathway is protein biosynthesis; polypeptide chain elongation. Functionally, involved in peptide bond synthesis. Alleviates ribosome stalling that occurs when 3 or more consecutive Pro residues or the sequence PPG is present in a protein, possibly by augmenting the peptidyl transferase activity of the ribosome. Modification of Lys-34 is required for alleviation. The sequence is that of Elongation factor P from Vibrio parahaemolyticus serotype O3:K6 (strain RIMD 2210633).